Here is a 62-residue protein sequence, read N- to C-terminus: Zinc metalloproteinase-disintegrin-like BaG (62 aa).

Residues 24-54 (KTDLLNRSHDNAQLSPINLVVAVIMAHEMGH) enclose the Peptidase M12B domain. N29 carries N-linked (GlcNAc...) asparagine glycosylation. H50 contributes to the Zn(2+) binding site. E51 is a catalytic residue. H54 serves as a coordination point for Zn(2+).

This sequence belongs to the venom metalloproteinase (M12B) family. P-III subfamily. P-IIIc sub-subfamily. In terms of assembly, dimer. It depends on Zn(2+) as a cofactor. Post-translationally, the N-terminus is blocked. In terms of tissue distribution, expressed by the venom gland.

It localises to the secreted. Inhibited by EDTA, and 1,10-phenanthroline. Snake venom Zinc metalloproteinase that inhibits ADP-induced platelet aggregation and inhibits the alpha-5/beta-1 (ITGA5/ITGB1) integrin, a fibronectin receptor. Has caseinolytic activity. Induces the detachment of cells that are bound to fibronectin. In Bothrops alternatus (Urutu), this protein is Zinc metalloproteinase-disintegrin-like BaG.